The sequence spans 285 residues: 4-hydroxybenzoate octaprenyltransferase (285 aa).

A run of 7 helical transmembrane segments spans residues 20–39, 92–112, 137–157, 159–179, 206–226, 228–248, and 260–280; these read GSYL…AQGL, ALGL…ALNW, FPQV…FMAV, EAVP…TVAY, YDRL…LGMG, YLGF…LFIH, and ACFS…LGIA.

This sequence belongs to the UbiA prenyltransferase family. It depends on Mg(2+) as a cofactor.

It localises to the cell inner membrane. The enzyme catalyses all-trans-octaprenyl diphosphate + 4-hydroxybenzoate = 4-hydroxy-3-(all-trans-octaprenyl)benzoate + diphosphate. The protein operates within cofactor biosynthesis; ubiquinone biosynthesis. Functionally, catalyzes the prenylation of para-hydroxybenzoate (PHB) with an all-trans polyprenyl group. Mediates the second step in the final reaction sequence of ubiquinone-8 (UQ-8) biosynthesis, which is the condensation of the polyisoprenoid side chain with PHB, generating the first membrane-bound Q intermediate 3-octaprenyl-4-hydroxybenzoate. In Pseudoalteromonas atlantica (strain T6c / ATCC BAA-1087), this protein is 4-hydroxybenzoate octaprenyltransferase.